Reading from the N-terminus, the 940-residue chain is Isoleucine--tRNA ligase (940 aa).

Residues 58-68 carry the 'HIGH' region motif; it reads PYANGSIHIGH. E564 is an L-isoleucyl-5'-AMP binding site. The short motif at 605 to 609 is the 'KMSKS' region element; sequence KMSKS. Residue K608 coordinates ATP. The Zn(2+) site is built by C903, C906, C923, and C926.

This sequence belongs to the class-I aminoacyl-tRNA synthetase family. IleS type 1 subfamily. As to quaternary structure, monomer. Requires Zn(2+) as cofactor.

The protein resides in the cytoplasm. The enzyme catalyses tRNA(Ile) + L-isoleucine + ATP = L-isoleucyl-tRNA(Ile) + AMP + diphosphate. In terms of biological role, catalyzes the attachment of isoleucine to tRNA(Ile). As IleRS can inadvertently accommodate and process structurally similar amino acids such as valine, to avoid such errors it has two additional distinct tRNA(Ile)-dependent editing activities. One activity is designated as 'pretransfer' editing and involves the hydrolysis of activated Val-AMP. The other activity is designated 'posttransfer' editing and involves deacylation of mischarged Val-tRNA(Ile). The protein is Isoleucine--tRNA ligase of Shewanella amazonensis (strain ATCC BAA-1098 / SB2B).